The following is a 262-amino-acid chain: Nurim (262 aa).

At 1 to 4 (MAPA) the chain is on the nuclear side. Residues 5–28 (LLLIPAALASFILAFGTGVEFVRF) form a helical membrane-spanning segment. Residues 29–58 (TSLRPLLGRISESGSPDARQGWLAALQDQS) lie on the Perinuclear space side of the membrane. A helical membrane pass occupies residues 59-80 (ILVPLVWDLGLLLLFVGQHSLM). Topologically, residues 81 to 97 (ATETVKEWMSRYFGVLQ) are nuclear. A helical transmembrane segment spans residues 98–114 (RSLYVACTALALQLVMR). Over 115–133 (YWEPVPRGPVLWETRTEPW) the chain is Perinuclear space. The helical transmembrane segment at 134–164 (ATWVPLLCFVLHVISWLLIFSILLVFDYAEL) threads the bilayer. The Nuclear segment spans residues 165 to 191 (MGLKQVYYHVLGLGEPLALKSPRALRL). A helical transmembrane segment spans residues 192–210 (FSHLRHPVCVELLTVLWVV). The Perinuclear space segment spans residues 211-216 (PTLGTD). A helical membrane pass occupies residues 217-234 (RLLLALLLTLYLGLAHGL). The Nuclear portion of the chain corresponds to 235–262 (DQHDLRYLRAQLQRKLHLLSRPQDGEAE).

This sequence belongs to the nurim family.

The protein localises to the nucleus inner membrane. The chain is Nurim (NRM) from Bos taurus (Bovine).